The chain runs to 272 residues: Imidazole glycerol phosphate synthase subunit HisF (272 aa).

Catalysis depends on residues aspartate 11 and aspartate 130.

Belongs to the HisA/HisF family. As to quaternary structure, heterodimer of HisH and HisF.

It localises to the cytoplasm. The enzyme catalyses 5-[(5-phospho-1-deoxy-D-ribulos-1-ylimino)methylamino]-1-(5-phospho-beta-D-ribosyl)imidazole-4-carboxamide + L-glutamine = D-erythro-1-(imidazol-4-yl)glycerol 3-phosphate + 5-amino-1-(5-phospho-beta-D-ribosyl)imidazole-4-carboxamide + L-glutamate + H(+). It functions in the pathway amino-acid biosynthesis; L-histidine biosynthesis; L-histidine from 5-phospho-alpha-D-ribose 1-diphosphate: step 5/9. Functionally, IGPS catalyzes the conversion of PRFAR and glutamine to IGP, AICAR and glutamate. The HisF subunit catalyzes the cyclization activity that produces IGP and AICAR from PRFAR using the ammonia provided by the HisH subunit. The polypeptide is Imidazole glycerol phosphate synthase subunit HisF (Methanococcus maripaludis (strain DSM 14266 / JCM 13030 / NBRC 101832 / S2 / LL)).